Here is a 385-residue protein sequence, read N- to C-terminus: UPF0284 protein A9601_04941 (385 aa).

This sequence belongs to the UPF0284 family.

The protein is UPF0284 protein A9601_04941 of Prochlorococcus marinus (strain AS9601).